A 380-amino-acid polypeptide reads, in one-letter code: Succinyl-diaminopimelate desuccinylase (380 aa).

A Zn(2+)-binding site is contributed by H69. The active site involves D71. A Zn(2+)-binding site is contributed by D102. E136 acts as the Proton acceptor in catalysis. E137, E165, and H351 together coordinate Zn(2+).

The protein belongs to the peptidase M20A family. DapE subfamily. Homodimer. Requires Zn(2+) as cofactor. Co(2+) is required as a cofactor.

It catalyses the reaction N-succinyl-(2S,6S)-2,6-diaminopimelate + H2O = (2S,6S)-2,6-diaminopimelate + succinate. It functions in the pathway amino-acid biosynthesis; L-lysine biosynthesis via DAP pathway; LL-2,6-diaminopimelate from (S)-tetrahydrodipicolinate (succinylase route): step 3/3. In terms of biological role, catalyzes the hydrolysis of N-succinyl-L,L-diaminopimelic acid (SDAP), forming succinate and LL-2,6-diaminopimelate (DAP), an intermediate involved in the bacterial biosynthesis of lysine and meso-diaminopimelic acid, an essential component of bacterial cell walls. This Bordetella petrii (strain ATCC BAA-461 / DSM 12804 / CCUG 43448) protein is Succinyl-diaminopimelate desuccinylase.